Here is a 341-residue protein sequence, read N- to C-terminus: Phenylalanine--tRNA ligase alpha subunit (341 aa).

Glu-255 serves as a coordination point for Mg(2+).

It belongs to the class-II aminoacyl-tRNA synthetase family. Phe-tRNA synthetase alpha subunit type 1 subfamily. In terms of assembly, tetramer of two alpha and two beta subunits. Requires Mg(2+) as cofactor.

Its subcellular location is the cytoplasm. It catalyses the reaction tRNA(Phe) + L-phenylalanine + ATP = L-phenylalanyl-tRNA(Phe) + AMP + diphosphate + H(+). The polypeptide is Phenylalanine--tRNA ligase alpha subunit (Natranaerobius thermophilus (strain ATCC BAA-1301 / DSM 18059 / JW/NM-WN-LF)).